The primary structure comprises 1914 residues: Diacylglycerol kinase eta (1914 aa).

Basic and acidic residues predominate over residues 1 to 10 (MSHLKLDTLH). The disordered stretch occupies residues 1-37 (MSHLKLDTLHVQRSPRGSRRSSRSSGRSSACSSGSIS). Residues 23–37 (RSSGRSSACSSGSIS) show a composition bias toward low complexity. One can recognise a PH domain in the interval 82–175 (AIIKEGFLLK…WLGSLKTATA (94 aa)). 2 consecutive Phorbol-ester/DAG-type zinc fingers follow at residues 195-245 (HHHW…IANC) and 268-319 (PHQW…AVAC). The DAGKc domain maps to 350 to 486 (GNFSPLLVFV…DRWSIMVFEK (137 aa)). 5 disordered regions span residues 621 to 642 (EKDQINSKERRNSRSLRSSEKE), 783 to 805 (GANIDDAGNRLSPCSDGGENTPT), 1016 to 1053 (TLCSEHVGPPKPPRKKSLSALSRTQAHPRRRNSSPPRI), 1116 to 1135 (QHRGGDNDSEYPEHQQTPTN), and 1175 to 1216 (PNTI…TVSL). The span at 1175 to 1187 (PNTILTTSTSPTK) shows a compositional bias: polar residues. An SAM domain is found at 1851-1914 (WSVNEVVTWL…LQAIKDLSEN (64 aa)).

Belongs to the eukaryotic diacylglycerol kinase family.

It localises to the cytoplasm. The catalysed reaction is a 1,2-diacyl-sn-glycerol + ATP = a 1,2-diacyl-sn-glycero-3-phosphate + ADP + H(+). Functionally, phosphorylates diacylglycerol (DAG) to generate phosphatidic acid (PA). This Drosophila sechellia (Fruit fly) protein is Diacylglycerol kinase eta.